The chain runs to 100 residues: NAD(P)H-quinone oxidoreductase subunit 4L, chloroplastic (100 aa).

3 consecutive transmembrane segments (helical) span residues 1 to 21 (MIEN…YGLI), 27 to 47 (IKVL…LVAF), and 61 to 81 (FAVF…AIVF).

It belongs to the complex I subunit 4L family. In terms of assembly, NDH is composed of at least 16 different subunits, 5 of which are encoded in the nucleus.

Its subcellular location is the plastid. It is found in the chloroplast thylakoid membrane. It carries out the reaction a plastoquinone + NADH + (n+1) H(+)(in) = a plastoquinol + NAD(+) + n H(+)(out). It catalyses the reaction a plastoquinone + NADPH + (n+1) H(+)(in) = a plastoquinol + NADP(+) + n H(+)(out). NDH shuttles electrons from NAD(P)H:plastoquinone, via FMN and iron-sulfur (Fe-S) centers, to quinones in the photosynthetic chain and possibly in a chloroplast respiratory chain. The immediate electron acceptor for the enzyme in this species is believed to be plastoquinone. Couples the redox reaction to proton translocation, and thus conserves the redox energy in a proton gradient. This chain is NAD(P)H-quinone oxidoreductase subunit 4L, chloroplastic, found in Chaetosphaeridium globosum (Charophycean green alga).